A 1463-amino-acid polypeptide reads, in one-letter code: Alpha-agarase (1463 aa).

The first 27 residues, 1–27 (MITSSKKIVSAMLSTSLWIGVASAAYA), serve as a signal peptide directing secretion. Positions 28–684 (ETTNVEAEGY…PSTLSESIFT (657 aa)) are excised as a propeptide. 2 disordered regions span residues 166-191 (VTPENPDNPDNPDNPDDGNTGQPGTP) and 512-549 (TDDIDQCANTPSGETANATGCSSSQEGGGTDPDTPQPG). Over residues 518-536 (CANTPSGETANATGCSSSQ) the composition is skewed to polar residues. A PA14 domain is found at 534 to 677 (SSQEGGGTDP…GGTNFVHPST (144 aa)). Positions 701–832 (IIVELESFVF…QWSGDRVRFT (132 aa)) constitute a CBM6 domain.

This sequence belongs to the glycosyl hydrolase 96 family. As to quaternary structure, monomer. Requires Ca(2+) as cofactor.

The catalysed reaction is Endohydrolysis of 1,3-alpha-L-galactosidic linkages in agarose, yielding agarotetraose as the major product.. Its function is as follows. Alpha-agarase. Hydrolyzes agarose, agarohexaose, neoagarohexaose and porphyran. Hydrolysis of porphyran by this enzyme improves its antioxidant activity. Does not hydrolyze kappa-carrageenan, iota-carrageenen or lambda-carrageenan. The chain is Alpha-agarase from Thalassotalea agarivorans (Thalassomonas agarivorans).